The primary structure comprises 351 residues: Phenylalanine--tRNA ligase alpha subunit (351 aa).

Glu266 is a binding site for Mg(2+).

The protein belongs to the class-II aminoacyl-tRNA synthetase family. Phe-tRNA synthetase alpha subunit type 1 subfamily. As to quaternary structure, tetramer of two alpha and two beta subunits. Requires Mg(2+) as cofactor.

The protein localises to the cytoplasm. The catalysed reaction is tRNA(Phe) + L-phenylalanine + ATP = L-phenylalanyl-tRNA(Phe) + AMP + diphosphate + H(+). The polypeptide is Phenylalanine--tRNA ligase alpha subunit (Anaplasma marginale (strain St. Maries)).